A 180-amino-acid chain; its full sequence is uncharacterized protein (180 aa).

Residues 114–136 (DKISESDSLPDEYKEYVVKHDSD) are compositionally biased toward basic and acidic residues. The interval 114 to 180 (DKISESDSLP…NFDNPDDNPK (67 aa)) is disordered. Over residues 137–146 (NSDNDSDNSD) the composition is skewed to acidic residues. Over residues 147-173 (NDSNNSDNDSNNSDSDSDNSNDPNNFD) the composition is skewed to low complexity.

This is an uncharacterized protein from Acanthamoeba polyphaga (Amoeba).